A 412-amino-acid chain; its full sequence is 43 kDa receptor-associated protein of the synapse (412 aa).

G2 carries N-myristoyl glycine lipidation. TPR repeat units lie at residues 6–39 (TKQQ…STEL), 83–116 (TEAY…EGGP), 123–156 (GQVC…AHGN), 163–196 (CRVC…VADY), 206–239 (AMSR…ALQH), 246–279 (ALCL…MTEI), and 286–319 (AHVL…ADAV). A Phosphotyrosine modification is found at Y196. The segment at 363-403 (CGLCGESIGDQNSQLQALPCSHLFHLKCLQTNGNRGCPNCK) adopts an RING-type zinc-finger fold. S405 is modified (phosphoserine).

It belongs to the RAPsyn family.

Its subcellular location is the cell membrane. The protein localises to the postsynaptic cell membrane. It localises to the cytoplasm. It is found in the cytoskeleton. Postsynaptic protein required for clustering of nicotinic acetylcholine receptors (nAChRs) at the neuromuscular junction. It may link the receptor to the underlying postsynaptic cytoskeleton, possibly by direct association with actin or spectrin. This is 43 kDa receptor-associated protein of the synapse (RAPSN) from Tetronarce californica (Pacific electric ray).